The primary structure comprises 229 residues: Orotidine 5'-phosphate decarboxylase (229 aa).

Substrate contacts are provided by residues aspartate 12, lysine 34, 61–70, threonine 116, arginine 177, glutamine 186, glycine 206, and arginine 207; that span reads DWKLHDIGAT. The Proton donor role is filled by lysine 63.

It belongs to the OMP decarboxylase family. Type 1 subfamily. Homodimer.

The catalysed reaction is orotidine 5'-phosphate + H(+) = UMP + CO2. Its pathway is pyrimidine metabolism; UMP biosynthesis via de novo pathway; UMP from orotate: step 2/2. Catalyzes the decarboxylation of orotidine 5'-monophosphate (OMP) to uridine 5'-monophosphate (UMP). The polypeptide is Orotidine 5'-phosphate decarboxylase (Caulobacter sp. (strain K31)).